We begin with the raw amino-acid sequence, 356 residues long: Guanine nucleotide-binding protein alpha-15 subunit (356 aa).

Gly-2 is lipidated: N-myristoyl glycine. Cys-5 carries S-palmitoyl cysteine lipidation. The G-alpha domain occupies 33–356 (GNQKLLLLGT…GRNLRGTGME (324 aa)). The segment at 36 to 49 (KLLLLGTGECGKST) is G1 motif. Residues 41–48 (GTGECGKS), 177–183 (LRIRIPT), 202–206 (DVGGQ), 271–274 (NKRD), and Ala-328 each bind GTP. Positions 48 and 183 each coordinate Mg(2+). The interval 175-183 (DMLRIRIPT) is G2 motif. The interval 198–207 (FRIYDVGGQR) is G3 motif. A G4 motif region spans residues 267–274 (ILFLNKRD). The interval 326–331 (TCATDT) is G5 motif.

This sequence belongs to the G-alpha family. In terms of assembly, g proteins are composed of 3 units; alpha, beta and gamma. The alpha chain contains the guanine nucleotide binding site.

Guanine nucleotide-binding proteins (G proteins) are involved as modulators or transducers in various transmembrane signaling systems. This Caenorhabditis elegans protein is Guanine nucleotide-binding protein alpha-15 subunit (gpa-15).